A 463-amino-acid chain; its full sequence is Bifunctional protein GlmU (463 aa).

A pyrophosphorylase region spans residues 1-228; sequence MEQALSIVVL…PAEVQGVNDR (228 aa). UDP-N-acetyl-alpha-D-glucosamine is bound by residues 10 to 13, K24, Q75, 80 to 81, 102 to 104, G138, E153, N168, and N226; these read LAAG, GT, and YGD. D104 lines the Mg(2+) pocket. N226 contacts Mg(2+). The interval 229-249 is linker; the sequence is VQLAAAERVWQRRQAEDWMRA. The interval 250–463 is N-acetyltransferase; the sequence is GVTILDPDRF…RPDRGEGSDA (214 aa). The UDP-N-acetyl-alpha-D-glucosamine site is built by R332 and K350. The active-site Proton acceptor is H362. UDP-N-acetyl-alpha-D-glucosamine is bound by residues Y365 and N376. Residues A379, 385–386, S404, A422, and R439 contribute to the acetyl-CoA site; that span reads NY. Positions 437–463 are disordered; that stretch reads VARSAQRSIHGWRRPGQRPDRGEGSDA. Positions 453 to 463 are enriched in basic and acidic residues; it reads QRPDRGEGSDA.

It in the N-terminal section; belongs to the N-acetylglucosamine-1-phosphate uridyltransferase family. The protein in the C-terminal section; belongs to the transferase hexapeptide repeat family. As to quaternary structure, homotrimer. The cofactor is Mg(2+).

It is found in the cytoplasm. The catalysed reaction is alpha-D-glucosamine 1-phosphate + acetyl-CoA = N-acetyl-alpha-D-glucosamine 1-phosphate + CoA + H(+). It catalyses the reaction N-acetyl-alpha-D-glucosamine 1-phosphate + UTP + H(+) = UDP-N-acetyl-alpha-D-glucosamine + diphosphate. It participates in nucleotide-sugar biosynthesis; UDP-N-acetyl-alpha-D-glucosamine biosynthesis; N-acetyl-alpha-D-glucosamine 1-phosphate from alpha-D-glucosamine 6-phosphate (route II): step 2/2. The protein operates within nucleotide-sugar biosynthesis; UDP-N-acetyl-alpha-D-glucosamine biosynthesis; UDP-N-acetyl-alpha-D-glucosamine from N-acetyl-alpha-D-glucosamine 1-phosphate: step 1/1. It functions in the pathway bacterial outer membrane biogenesis; LPS lipid A biosynthesis. Catalyzes the last two sequential reactions in the de novo biosynthetic pathway for UDP-N-acetylglucosamine (UDP-GlcNAc). The C-terminal domain catalyzes the transfer of acetyl group from acetyl coenzyme A to glucosamine-1-phosphate (GlcN-1-P) to produce N-acetylglucosamine-1-phosphate (GlcNAc-1-P), which is converted into UDP-GlcNAc by the transfer of uridine 5-monophosphate (from uridine 5-triphosphate), a reaction catalyzed by the N-terminal domain. In Alkalilimnicola ehrlichii (strain ATCC BAA-1101 / DSM 17681 / MLHE-1), this protein is Bifunctional protein GlmU.